The following is a 58-amino-acid chain: Small ribosomal subunit protein bS21 (58 aa).

Positions Phe37–Phe58 are disordered. A compositionally biased stretch (basic residues) spans Val43–Phe58.

Belongs to the bacterial ribosomal protein bS21 family.

The polypeptide is Small ribosomal subunit protein bS21 (Enterococcus faecalis (strain ATCC 700802 / V583)).